The chain runs to 291 residues: Small ribosomal subunit protein uS2 (291 aa).

This sequence belongs to the universal ribosomal protein uS2 family.

The sequence is that of Small ribosomal subunit protein uS2 from Orientia tsutsugamushi (strain Boryong) (Rickettsia tsutsugamushi).